The sequence spans 587 residues: Probable terpene synthase 12 (587 aa).

The Mg(2+) site is built by aspartate 338, aspartate 342, and glutamate 489. The short motif at 338–342 (DDVYD) is the DDXXD motif element.

The protein belongs to the terpene synthase family. It depends on Mg(2+) as a cofactor.

Its function is as follows. Probable sesquiterpene synthase. The chain is Probable terpene synthase 12 (TPS12) from Ricinus communis (Castor bean).